A 201-amino-acid polypeptide reads, in one-letter code: Transmembrane 4 L6 family member 18 (201 aa).

Residues 1–9 lie on the Cytoplasmic side of the membrane; it reads MGSRKCGSC. A helical membrane pass occupies residues 10-30; sequence LSSLLIPLALWSIIVNILLYF. Over 31-49 the chain is Extracellular; sequence PNGQASYASSNKLTNYVWY. A helical membrane pass occupies residues 50-70; that stretch reads FEGICFSGIMMLVVAAVLLVL. The Cytoplasmic portion of the chain corresponds to 71 to 93; that stretch reads ENDNNYKCCQSENCSKKYMTVLS. Residues 94–114 form a helical membrane-spanning segment; the sequence is MIFSALGIAFSGYCLVISALG. The Extracellular portion of the chain corresponds to 115-157; the sequence is LLQGPYCRTLDGWEYAFEGTAGRFLTDSREWIQCLEPAHVVEW. Residues 158-178 form a helical membrane-spanning segment; sequence NIILFSILIALSGLQVIVCLI. Residues 179-201 lie on the Cytoplasmic side of the membrane; the sequence is RVVIQLSKSLCGTYSVIIQPGII.

It belongs to the L6 tetraspanin family.

The protein localises to the membrane. This Bos taurus (Bovine) protein is Transmembrane 4 L6 family member 18 (TM4SF18).